We begin with the raw amino-acid sequence, 152 residues long: Diamine acetyltransferase (152 aa).

Residues Phe5 to Asp152 enclose the N-acetyltransferase domain. The Proton donor role is filled by Tyr127.

Belongs to the acetyltransferase family. As to quaternary structure, homotetramer.

The protein resides in the cytoplasm. It catalyses the reaction an alkane-alpha,omega-diamine + acetyl-CoA = an N-acetylalkane-alpha,omega-diamine + CoA + H(+). It participates in amine and polyamine degradation; putrescine degradation; N-acetylputrescine from putrescine: step 1/1. Enzyme which catalyzes the acetylation of polyamines. Displays higher substrate specificity for spermine than for spermidine. May function to acetylate host-derived polyamines, thus alleviating the necessity for de novo synthesis of these molecules. The chain is Diamine acetyltransferase from Cryptosporidium parvum (strain Iowa II).